The primary structure comprises 274 residues: Thiamine kinase (274 aa).

Belongs to the thiamine kinase family.

It carries out the reaction thiamine + ATP = thiamine phosphate + ADP + H(+). It participates in cofactor biosynthesis; thiamine diphosphate biosynthesis; thiamine phosphate from thiamine: step 1/1. Its function is as follows. Catalyzes the ATP-dependent phosphorylation of thiamine to thiamine phosphate. Is involved in thiamine salvage. The chain is Thiamine kinase from Salmonella gallinarum (strain 287/91 / NCTC 13346).